The following is a 281-amino-acid chain: Imidazoleglycerol-phosphate dehydratase, chloroplastic (281 aa).

The transit peptide at 1-85 (MELYAASHSL…TSLPFHPETR (85 aa)) directs the protein to the chloroplast. Residues Glu95, 121-129 (HMLDQLASH), 147-151 (HHTNE), Arg173, and Arg195 contribute to the substrate site. Mn(2+) is bound by residues His121, His147, His148, and Glu151. Residues His219, His243, His244, and Glu247 each coordinate Mn(2+). Residues 243–251 (HHIIEATFK) and 273–275 (SSK) each bind substrate.

The protein belongs to the imidazoleglycerol-phosphate dehydratase family. Requires Mn(2+) as cofactor.

Its subcellular location is the plastid. It is found in the chloroplast. The catalysed reaction is D-erythro-1-(imidazol-4-yl)glycerol 3-phosphate = 3-(imidazol-4-yl)-2-oxopropyl phosphate + H2O. It participates in amino-acid biosynthesis; L-histidine biosynthesis; L-histidine from 5-phospho-alpha-D-ribose 1-diphosphate: step 6/9. In Pisum sativum (Garden pea), this protein is Imidazoleglycerol-phosphate dehydratase, chloroplastic.